Here is a 462-residue protein sequence, read N- to C-terminus: tRNA modification GTPase MnmE (462 aa).

(6S)-5-formyl-5,6,7,8-tetrahydrofolate-binding residues include Arg-23, Glu-86, and Lys-125. One can recognise a TrmE-type G domain in the interval 221–384; sequence GIPVAIVGEP…LKNQLLSFVN (164 aa). K(+) is bound at residue Asn-231. Residues 231-236, 250-256, and 275-278 each bind GTP; these read NVGKST, SEIAGTT, and DTAG. Mg(2+) is bound at residue Ser-235. The K(+) site is built by Ser-250, Ile-252, and Thr-255. Residue Thr-256 participates in Mg(2+) binding. Lys-462 contributes to the (6S)-5-formyl-5,6,7,8-tetrahydrofolate binding site.

This sequence belongs to the TRAFAC class TrmE-Era-EngA-EngB-Septin-like GTPase superfamily. TrmE GTPase family. Homodimer. Heterotetramer of two MnmE and two MnmG subunits. The cofactor is K(+).

The protein localises to the cytoplasm. Functionally, exhibits a very high intrinsic GTPase hydrolysis rate. Involved in the addition of a carboxymethylaminomethyl (cmnm) group at the wobble position (U34) of certain tRNAs, forming tRNA-cmnm(5)s(2)U34. This Flavobacterium psychrophilum (strain ATCC 49511 / DSM 21280 / CIP 103535 / JIP02/86) protein is tRNA modification GTPase MnmE.